The primary structure comprises 588 residues: Snake venom 5'-nucleotidase (588 aa).

An N-terminal signal peptide occupies residues 1 to 40 (MQTPKRRRGAQGCPRSSPSPPLLLLVRAVWFCAALSVAAG). Zn(2+) contacts are provided by aspartate 51 and histidine 53. An intrachain disulfide couples cysteine 66 to cysteine 71. The Zn(2+) site is built by aspartate 99 and asparagine 131. The N-linked (GlcNAc...) asparagine glycan is linked to asparagine 167. Residues histidine 234 and histidine 257 each coordinate Zn(2+). N-linked (GlcNAc...) asparagine glycosylation is found at asparagine 347 and asparagine 361. Intrachain disulfides connect cysteine 367–cysteine 372 and cysteine 379–cysteine 401. Residue arginine 368 coordinates AMP. Positions 404 and 409 each coordinate AMP. N-linked (GlcNAc...) asparagine glycosylation occurs at asparagine 418. Phenylalanine 432 contributes to the AMP binding site. An intrachain disulfide couples cysteine 491 to cysteine 494. AMP-binding residues include phenylalanine 515 and aspartate 521. The N-linked (GlcNAc...) asparagine glycan is linked to asparagine 532. The GPI-anchor amidated serine moiety is linked to residue serine 564. Positions 565 to 588 (AGTLFQAQLFLTWGLCVSLLYFIL) are cleaved as a propeptide — removed in mature form.

Belongs to the 5'-nucleotidase family. Zn(2+) is required as a cofactor. In terms of processing, venom 5'-nucleotidases (or a part thereof) may be released into the venom via exosome-like vesicles. They may be attached via a GPI anchor to the membrane of these vesicles. Soluble forms of 5'-nucleotidase might be released by cleavage of the ectodomain in the exosome-like vesicles or venom gland cells. Expressed by the venom gland.

The protein localises to the membrane. It catalyses the reaction a ribonucleoside 5'-phosphate + H2O = a ribonucleoside + phosphate. Hydrolyzes nucleotides into nucleosides. Snake venom 5'-nucleotidases are widely distributed among venomous snake taxa, but there is a lack of information about their biological activities. They have been shown to inhibit platelet aggregation. This effect may be due to the liberation of inhibitory AMP or adenosine by its action on ADP released upon initiation of aggregation. Venom 5'-nucleotidases are also known to synergistically act in vivo with other toxins like ADPases, phospholipases, and disintegrins to exert a more pronounced anti-coagulant effect. The protein is Snake venom 5'-nucleotidase of Crotalus adamanteus (Eastern diamondback rattlesnake).